The primary structure comprises 652 residues: Forkhead box protein O1 (652 aa).

Disordered stretches follow at residues 1 to 62 and 112 to 154; these read MAEA…ASAS and VHPA…SSRR. Thr24 is modified (phosphothreonine; by PKB/AKT1 or PKB/AKT2 and SGK1). Over residues 35–62 the composition is skewed to low complexity; sequence SNSTTSSPAPSGGAAANPDAAASLASAS. A compositionally biased stretch (pro residues) spans 114-133; it reads PAPPQPPPTGPLSQPPPVPP. Residues 134-146 show a composition bias toward low complexity; that stretch reads SAAAAAGPLAGQP. The segment at residues 156–232 is a DNA-binding region (fork-head); that stretch reads AWGNLSYADL…VQNEGTGKSS (77 aa). DNA-binding regions lie at residues 208–215 and 231–234; these read NSIRHNLS and SSWW. The residue at position 209 (Ser209) is a Phosphoserine; by STK4/MST1. Residues Ser215, Ser231, and Ser232 each carry the phosphoserine modification. Disordered regions lie at residues 231–342 and 383–410; these read SSWW…DVHS and SLTV…PNTS. N6-acetyllysine occurs at positions 242 and 245. Phosphoserine; by CDK1 is present on Ser246. Omega-N-methylarginine; by PRMT1 occurs at positions 248 and 250. Residues 248–250 carry the Nuclear localization signal motif; that stretch reads RRR. A Phosphoserine; by PKB/AKT1 and SGK1 modification is found at Ser253. N6-acetyllysine is present on residues Lys259, Lys262, and Lys271. Residues 261 to 272 show a composition bias toward basic residues; the sequence is AKSRGRAAKKKA. Residues 280–562 are sufficient for interaction with NLK; sequence GPGDSPGSQF…TPVKTPLQVP (283 aa). Ser284 and Ser295 each carry phosphoserine. The span at 306-323 shows a compositional bias: polar residues; that stretch reads NWSTFRPRTSSNASTISG. Ser316 is subject to Phosphoserine; by PKB/AKT1 or PKB/AKT2. Ser319 is subject to Phosphoserine; by CK1 and SGK1. Ser322 carries the post-translational modification Phosphoserine; by CK1. A Phosphoserine modification is found at Ser326. A Phosphothreonine modification is found at Thr330. A required for interaction with RUNX2 region spans residues 360-456; it reads SEISNPENME…GGLNQYNCAP (97 aa). Positions 392 to 401 are enriched in polar residues; the sequence is PGSMMQQTPC. Lys420 is modified (N6-acetyllysine). Residues 459-463 carry the Required for interaction with SIRT1 motif; the sequence is LKELL.

As to quaternary structure, interacts with EP300 and CREBBP; the interactions acetylate FOXO1. Interacts with the 14-3-3 proteins, YWHAG and YWHAZ; the interactions require insulin-stimulated phosphorylation on Thr-24, promote nuclear exit and loss of transcriptional activity. Interacts with SKP2; the interaction ubiquitinates FOXO1 leading to its proteasomal degradation. Interacts with PMRT1; methylates FOXO1, prevents PKB/AKT1 phosphorylation and retains FOXO1 in the nucleus. Interacts (via an N-terminal domain) with FCOR; the interaction is direct, occurs in a forskolin-independent manner and prevents SIRT1 binding to FOXO1. Interacts (via the C-terminal half) with ATF4 (via its DNA-binding domain); the interaction occurs in osteoblasts, regulates glucose homeostasis via suppression of beta-cell proliferation and subsequent decrease in insulin production. Interacts with RUNX2; the interaction inhibits RUNX2 transcriptional activity and mediates the IGF1/insulin-dependent BGLAP expression in osteoblasts. Interacts with PPP2R1A; the interaction regulates the dephosphorylation of FOXO1 at Thr-24 and Ser-253 leading to its nuclear import. Binds to CDK1. Interacts with LRPPRC. Interacts with RUNX2; the interaction inhibits RUNX2 transcriptional activity and mediates the IGF1/insulin-dependent BGLAP expression in osteoblasts. Interacts with NLK. Interacts with SIRT1; the interaction results in the deacetylation of FOXO1 leading to activation of FOXO1-mediated transcription of genes involved in DNA repair and stress resistance. The interaction requires the presence of KRIT1 and is inhibited by FCOR. Interacts with SIRT2; the interaction is disrupted in response to oxidative stress or serum deprivation, leading to increased level of acetylated FOXO1, which promotes stress-induced autophagy by stimulating E1-like activating enzyme ATG7. Interacts (acetylated form) with ATG7; the interaction is increased in response to oxidative stress or serum deprivation and promotes the autophagic process leading to cell death. Interacts (acetylated form) with PPARG. Interacts with XBP1 isoform 2; this interaction is direct and leads to FOXO1 ubiquitination and degradation via the proteasome pathway. Interacts (via the Fork-head domain) with CEBPA; the interaction increases when FOXO1 is deacetylated. Interacts with WDFY2. Forms a complex with WDFY2 and AKT1. Interacts with CRY1. Interacts with PPIA/CYPA; the interaction promotes FOXO1 dephosphorylation, nuclear accumulation and transcriptional activity. Interacts with TOX4; FOXO1 is required for full induction of TOX4-dependent activity and the interaction is inhibited by insulin. Interacts (when phosphorylated on Ser-253) with STUB1/CHIP. Phosphorylation by NLK promotes nuclear export and inhibits the transcriptional activity. In response to growth factors, phosphorylation on Thr-24, Ser-253 and Ser-319 by PKB/AKT1 promotes nuclear export and inactivation of transactivational activity. Phosphorylation on Thr-24 is required for binding 14-3-3 proteins. Phosphorylation of Ser-253 decreases DNA-binding activity and promotes the phosphorylation of Thr-24 and Ser-316, permitting phosphorylation of Ser-319 and Ser-322, probably by CDK1, leading to nuclear exclusion and loss of function. Stress signals, such as response to oxygen or nitric oxide, attenuate the PKB/AKT1-mediated phosphorylation leading to nuclear retention. Phosphorylation of Ser-326 is independent of IGF1 and leads to reduced function. Dephosphorylated on Thr-24 and Ser-253 by PP2A in beta-cells under oxidative stress leading to nuclear retention. Phosphorylation of Ser-246 by CDK1 disrupts binding of 14-3-3 proteins leading to nuclear accumulation and has no effect on DNA-binding nor transcriptional activity. Phosphorylation by STK4/MST1 on Ser-209, upon oxidative stress, inhibits binding to 14-3-3 proteins and nuclear export. PPIA/CYPA promotes its dephosphorylation on Ser-253. Post-translationally, ubiquitinated by SKP2. Ubiquitinated, leading to proteasomal degradation. Ubiquitinated by STUB1/CHIP; when Ser-253 is phosphorylated. In terms of processing, methylation inhibits PKB/AKT1-mediated phosphorylation at Ser-253, promoting nuclear retention and increasing the transcriptional activity and cell death. Methylation increased by oxidative stress. Acetylation at Lys-259 and Lys-271 are necessary for autophagic cell death induction. Deacetylated by SIRT2 in response to oxidative stress or serum deprivation, thereby negatively regulating FOXO1-mediated autophagic cell death. Once in the nucleus, acetylated by CREBBP/EP300. Acetylation diminishes the interaction with target DNA and attenuates the transcriptional activity. It increases the phosphorylation at Ser-253, and is required for the transcriptional inhibition by FCOR. Deacetylation by SIRT1 results in reactivation of the transcriptional activity. Acetylation of FOXO1 diminishes its binding to PPARG in adipocytes. Deacetylated by SIRT2; deacetylation of FOXO1 directly increases its repressive binding to PPARG and inhibits adipocyte differentiation. Oxidative stress by hydrogen peroxide treatment appears to promote deacetylation and uncoupling of insulin-induced phosphorylation. By contrast, resveratrol acts independently of acetylation. Acetylated at Lys-420, promoting its localization to the nucleus and transcription factor activity. Deacetylation at Lys-420 by SIRT6, promotes its translocation into the cytoplasm, preventing its transcription factor activity. Deacetylation and subsequent inhibition by SIRT6 has different effects depending on cell types: it inhibits gluconeogenesis in hepatocytes, promotes glucose sensing in pancreatic beta-cells and regulates lipid catabolism in brown adipocytes. As to expression, expressed in liver, white and brown adipose tissues (at protein level).

It is found in the cytoplasm. The protein localises to the nucleus. In terms of biological role, transcription factor that is the main target of insulin signaling and regulates metabolic homeostasis in response to oxidative stress. Binds to the insulin response element (IRE) with consensus sequence 5'-TT[G/A]TTTTG-3' and the related Daf-16 family binding element (DBE) with consensus sequence 5'-TT[G/A]TTTAC-3'. Activity suppressed by insulin. Main regulator of redox balance and osteoblast numbers and controls bone mass. Orchestrates the endocrine function of the skeleton in regulating glucose metabolism. Also acts as a key regulator of chondrogenic commitment of skeletal progenitor cells in response to lipid availability: when lipids levels are low, translocates to the nucleus and promotes expression of SOX9, which induces chondrogenic commitment and suppresses fatty acid oxidation. Acts synergistically with ATF4 to suppress osteocalcin/BGLAP activity, increasing glucose levels and triggering glucose intolerance and insulin insensitivity. Also suppresses the transcriptional activity of RUNX2, an upstream activator of osteocalcin/BGLAP. Acts as an inhibitor of glucose sensing in pancreatic beta cells by acting as a transcription repressor and suppressing expression of PDX1. In hepatocytes, promotes gluconeogenesis by acting together with PPARGC1A and CEBPA to activate the expression of genes such as IGFBP1, G6PC1 and PCK1. Also promotes gluconeogenesis by directly promoting expression of PPARGC1A and G6PC1. Important regulator of cell death acting downstream of CDK1, PKB/AKT1 and STK4/MST1. Promotes neural cell death. Mediates insulin action on adipose tissue. Regulates the expression of adipogenic genes such as PPARG during preadipocyte differentiation and, adipocyte size and adipose tissue-specific gene expression in response to excessive calorie intake. Regulates the transcriptional activity of GADD45A and repair of nitric oxide-damaged DNA in beta-cells. Required for the autophagic cell death induction in response to starvation or oxidative stress in a transcription-independent manner. Mediates the function of MLIP in cardiomyocytes hypertrophy and cardiac remodeling. Positive regulator of apoptosis in cardiac smooth muscle cells as a result of its transcriptional activation of pro-apoptotic genes. Regulates endothelial cell (EC) viability and apoptosis in a PPIA/CYPA-dependent manner via transcription of CCL2 and BCL2L11 which are involved in EC chemotaxis and apoptosis. In Mus musculus (Mouse), this protein is Forkhead box protein O1 (Foxo1).